Reading from the N-terminus, the 269-residue chain is Formamidopyrimidine-DNA glycosylase (269 aa).

The active-site Schiff-base intermediate with DNA is the Pro2. The active-site Proton donor is Glu3. The active-site Proton donor; for beta-elimination activity is Lys57. DNA-binding residues include His90, Arg109, and Lys150. Residues 235 to 269 (QVYGRKGEPCRVCGTPIVATKHAQRATFYCRHCQK) form an FPG-type zinc finger. Arg259 serves as the catalytic Proton donor; for delta-elimination activity.

Belongs to the FPG family. As to quaternary structure, monomer. Zn(2+) serves as cofactor.

The enzyme catalyses Hydrolysis of DNA containing ring-opened 7-methylguanine residues, releasing 2,6-diamino-4-hydroxy-5-(N-methyl)formamidopyrimidine.. It catalyses the reaction 2'-deoxyribonucleotide-(2'-deoxyribose 5'-phosphate)-2'-deoxyribonucleotide-DNA = a 3'-end 2'-deoxyribonucleotide-(2,3-dehydro-2,3-deoxyribose 5'-phosphate)-DNA + a 5'-end 5'-phospho-2'-deoxyribonucleoside-DNA + H(+). Involved in base excision repair of DNA damaged by oxidation or by mutagenic agents. Acts as a DNA glycosylase that recognizes and removes damaged bases. Has a preference for oxidized purines, such as 7,8-dihydro-8-oxoguanine (8-oxoG). Has AP (apurinic/apyrimidinic) lyase activity and introduces nicks in the DNA strand. Cleaves the DNA backbone by beta-delta elimination to generate a single-strand break at the site of the removed base with both 3'- and 5'-phosphates. The sequence is that of Formamidopyrimidine-DNA glycosylase from Salmonella newport (strain SL254).